The following is a 97-amino-acid chain: Large ribosomal subunit protein bL27 (97 aa).

The segment at 1–23 (MAHKKGASSSRNGRDSTSKRLGV) is disordered.

The protein belongs to the bacterial ribosomal protein bL27 family.

The protein is Large ribosomal subunit protein bL27 of Acidothermus cellulolyticus (strain ATCC 43068 / DSM 8971 / 11B).